The chain runs to 1425 residues: Death-associated protein kinase dapk-1 (1425 aa).

The Protein kinase domain occupies 28–289; the sequence is YEIETELGSG…VEECLQHPWI (262 aa). Residues 34-42 and lysine 57 contribute to the ATP site; that span reads LGSGQFAVV. Aspartate 155 acts as the Proton acceptor in catalysis. ANK repeat units follow at residues 392–421, 425–454, 458–487, 491–520, 524–553, 557–586, 590–619, 623–652, 810–841, and 934–963; these read NGAT…NICA, NGDT…DVDS, TGET…RLDL, SGDT…PLHL, REET…PIDA, DGKT…DINH, HGDT…TVDS, NKKT…DVTL, GGYE…DPTE, and IGMK…ILDT. The 256-residue stretch at 695 to 950 folds into the Roc domain; sequence LDTSLRRIKL…MELAKCRTNI (256 aa). Residues 1308–1389 enclose the Death domain; the sequence is ELACLLDPPH…DARDALYRTV (82 aa).

Belongs to the protein kinase superfamily. CAMK Ser/Thr protein kinase family. DAP kinase subfamily. Interacts with ptrn-1. Requires Mg(2+) as cofactor. As to expression, expressed in epidermis, muscles and neurons.

Its subcellular location is the cytoplasm. It is found in the cytosol. The protein resides in the cytoskeleton. It carries out the reaction L-seryl-[protein] + ATP = O-phospho-L-seryl-[protein] + ADP + H(+). It catalyses the reaction L-threonyl-[protein] + ATP = O-phospho-L-threonyl-[protein] + ADP + H(+). In terms of biological role, negative regulator of epidermal barrier repair and innate immune responses to wounding. The role in epidermal tissue integrity and wound healing is established through the inhibition of epidermal microtubule stability, possibly via the negative regulation of the microtubule minus-end binding protein ptrn-1. In epidermis, prevents expression of specific unc-44 isoforms probably by promoting nuclear localization of pinn-1, which in turn may affect sydn-1-ssup-72-mediated regulation of alternative polyadenylation of unc-44 mRNA. Appears to act downstream of or in parallel to muscarinic signaling in the regulation of autophagy. This Caenorhabditis elegans protein is Death-associated protein kinase dapk-1.